The primary structure comprises 240 residues: Octanoyltransferase (240 aa).

The interval 1-22 (MGTTGTNDGATTPPANTSTPAV) is disordered. Low complexity predominate over residues 10–21 (ATTPPANTSTPA). In terms of domain architecture, BPL/LPL catalytic spans 51 to 236 (EKIPDTILLL…NLVDALNGDL (186 aa)). Substrate-binding positions include 89–96 (RGGRITWH), 166–168 (AIG), and 179–181 (GVA). Cys197 (acyl-thioester intermediate) is an active-site residue.

This sequence belongs to the LipB family.

Its subcellular location is the cytoplasm. It carries out the reaction octanoyl-[ACP] + L-lysyl-[protein] = N(6)-octanoyl-L-lysyl-[protein] + holo-[ACP] + H(+). It functions in the pathway protein modification; protein lipoylation via endogenous pathway; protein N(6)-(lipoyl)lysine from octanoyl-[acyl-carrier-protein]: step 1/2. Catalyzes the transfer of endogenously produced octanoic acid from octanoyl-acyl-carrier-protein onto the lipoyl domains of lipoate-dependent enzymes. Lipoyl-ACP can also act as a substrate although octanoyl-ACP is likely to be the physiological substrate. The chain is Octanoyltransferase from Corynebacterium jeikeium (strain K411).